The following is a 1071-amino-acid chain: Kinesin-like protein KIN-14J (1071 aa).

Residues 39–142 (KKGHQSLVEW…SLKALKASFS (104 aa)) enclose the Calponin-homology (CH) domain. A disordered region spans residues 157 to 181 (WSLPEDHSDSRGDDRNFTDGFQSKE). Residues 158 to 173 (SLPEDHSDSRGDDRNF) are compositionally biased toward basic and acidic residues. Residues 299-389 (EKTRIEEKER…ELEKLCQSKS (91 aa)) are a coiled coil. The 329-residue stretch at 472–800 (NIRVYCRIRP…LKFAERVSGV (329 aa)) folds into the Kinesin motor domain. Residue 556–563 (GQTGSGKT) coordinates ATP. Positions 811-844 (GRDVRQLMEQVSNLKDVIAKKDEELQNFQKVKGN) form a coiled coil. Disordered stretches follow at residues 852–931 (GLSN…AAKG) and 995–1071 (ARMT…NRRR). Composition is skewed to basic and acidic residues over residues 910–921 (SDERKHQKDYHQ) and 995–1017 (ARMT…KDRT). Over residues 1034–1049 (TRPSRLSIATSSSSKA) the composition is skewed to polar residues.

This sequence belongs to the TRAFAC class myosin-kinesin ATPase superfamily. Kinesin family. KIN-14 subfamily.

In Arabidopsis thaliana (Mouse-ear cress), this protein is Kinesin-like protein KIN-14J.